Consider the following 678-residue polypeptide: DNA ligase (678 aa).

NAD(+) is bound by residues 47-51 (DSDYD), 96-97 (SL), and Glu-122. Lys-124 (N6-AMP-lysine intermediate) is an active-site residue. 4 residues coordinate NAD(+): Arg-145, Glu-182, Lys-300, and Lys-324. The Zn(2+) site is built by Cys-418, Cys-421, Cys-436, and Cys-442. The region spanning 602 to 678 (AYNESFTGKT…ILEDNLKDLL (77 aa)) is the BRCT domain.

This sequence belongs to the NAD-dependent DNA ligase family. LigA subfamily. It depends on Mg(2+) as a cofactor. Requires Mn(2+) as cofactor.

The catalysed reaction is NAD(+) + (deoxyribonucleotide)n-3'-hydroxyl + 5'-phospho-(deoxyribonucleotide)m = (deoxyribonucleotide)n+m + AMP + beta-nicotinamide D-nucleotide.. Functionally, DNA ligase that catalyzes the formation of phosphodiester linkages between 5'-phosphoryl and 3'-hydroxyl groups in double-stranded DNA using NAD as a coenzyme and as the energy source for the reaction. It is essential for DNA replication and repair of damaged DNA. The polypeptide is DNA ligase (Francisella tularensis subsp. holarctica (strain FTNF002-00 / FTA)).